The following is an 848-amino-acid chain: MFERFTDRARRVVVLAQEEARMLNHNYIGTEHILLGLIHEGEGVAAKSLESLGISLEGVRSQVEEIIGQGQQAPSGHIPFTPRAKKVLELSLREALQLGHNYIGTEHILLGLIREGEGVAAQVLVKLGAELTRVRQQVIQLLSGYQGKEAAEAGTGGRGGESGNPSTSLVLDQFGRNLTAAAMEGKLDPVIGREKEIERVMQVLSRRTKNNPVLIGEPGVGKTAVVEGLAQAIVHGEVPETLKDKQLYTLDLGSLVAGSRYRGDFEERLKKVLKEINTRGDIILFIDELHTLVGAGAAEGAIDAASILKPKLARGELQTIGATTLDEYRKYIEKDAALERRFQPVQVGEPTVEHTIEILKGLRDRYEAHHRVSITDSAMVAAATLADRYINDRFLPDKAIDLIDEAGARMRIRRMTAPPDLREFDEKIADARREKESAIDAQDFEKAAALRDKEKQLVAQRAEREKQWRSGDLDVVAEVDDEQIAEVLGNWTGIPVFKLTEEETTRLLRMEEELHKRIIGQEDAVKAVSKAIRRTRAGLKDPKRPSGSFIFAGPSGVGKTELSKALANFLFGDDDALIQIDMGEFHDRFTASRLFGAPPGYVGYEEGGQLTEKVRRKPFSVVLFDEIEKAHQEIYNSLLQVLEDGRLTDGQGRTVDFKNTVLIFTSNLGTSDISKAVGLGFSQGGSENNYERMKQKVHDELKKHFRPEFLNRIDDIIVFHQLTQDEIIQMVDLMIGRVSNQLKTKDMALELSDKAKALLAKRGFDPVLGARPLRRTIQREIEDQLSEKILFEEIGPGQLVTVDVEGWDGEGQGEDAKFTFSGGPKRAETAEPDLAGAGAAGAPTAGTE.

The 143-residue stretch at 2–144 (FERFTDRARR…RQQVIQLLSG (143 aa)) folds into the Clp R domain. 2 repeat regions span residues 5 to 70 (FTDR…IGQG) and 80 to 144 (FTPR…LLSG). The region spanning 425 to 460 (DEKIADARREKESAIDAQDFEKAAALRDKEKQLVAQ) is the UVR domain. Residues 553–560 (GPSGVGKT) and 617–626 (KPFSVVLFDE) each bind ATP. A disordered region spans residues 811 to 848 (GQGEDAKFTFSGGPKRAETAEPDLAGAGAAGAPTAGTE). A compositionally biased stretch (low complexity) spans 835–848 (AGAGAAGAPTAGTE).

It belongs to the ClpA/ClpB family. ClpC subfamily.

Functionally, ATP-dependent specificity component of the Clp protease. It directs the protease to specific substrates. Can perform chaperone functions in the absence of ClpP. Degrades anti-sigma-E factor RseA in the presence of ClpP2. The sequence is that of ATP-dependent Clp protease ATP-binding subunit ClpC1 (clpC1) from Mycolicibacterium smegmatis (strain ATCC 700084 / mc(2)155) (Mycobacterium smegmatis).